We begin with the raw amino-acid sequence, 553 residues long: ATP synthase subunit alpha (553 aa).

G173–T180 contributes to the ATP binding site. A disordered region spans residues E527–H553. Basic and acidic residues predominate over residues A533 to H553.

This sequence belongs to the ATPase alpha/beta chains family. F-type ATPases have 2 components, CF(1) - the catalytic core - and CF(0) - the membrane proton channel. CF(1) has five subunits: alpha(3), beta(3), gamma(1), delta(1), epsilon(1). CF(0) has three main subunits: a(1), b(2) and c(9-12). The alpha and beta chains form an alternating ring which encloses part of the gamma chain. CF(1) is attached to CF(0) by a central stalk formed by the gamma and epsilon chains, while a peripheral stalk is formed by the delta and b chains.

It localises to the cell membrane. The enzyme catalyses ATP + H2O + 4 H(+)(in) = ADP + phosphate + 5 H(+)(out). Functionally, produces ATP from ADP in the presence of a proton gradient across the membrane. The alpha chain is a regulatory subunit. The chain is ATP synthase subunit alpha from Parafrankia sp. (strain EAN1pec).